The following is a 431-amino-acid chain: Glutamate-1-semialdehyde 2,1-aminomutase (431 aa).

At K269 the chain carries N6-(pyridoxal phosphate)lysine.

The protein belongs to the class-III pyridoxal-phosphate-dependent aminotransferase family. HemL subfamily. As to quaternary structure, homodimer. It depends on pyridoxal 5'-phosphate as a cofactor.

The protein resides in the cytoplasm. It carries out the reaction (S)-4-amino-5-oxopentanoate = 5-aminolevulinate. Its pathway is porphyrin-containing compound metabolism; protoporphyrin-IX biosynthesis; 5-aminolevulinate from L-glutamyl-tRNA(Glu): step 2/2. It functions in the pathway porphyrin-containing compound metabolism; chlorophyll biosynthesis. In Prosthecochloris aestuarii (strain DSM 271 / SK 413), this protein is Glutamate-1-semialdehyde 2,1-aminomutase.